We begin with the raw amino-acid sequence, 672 residues long: tRNA 5-methylaminomethyl-2-thiouridine biosynthesis bifunctional protein MnmC (672 aa).

The tract at residues 1–243 (MTSITHAELG…KREMIAGCME (243 aa)) is tRNA (mnm(5)s(2)U34)-methyltransferase. Residues 269-672 (IGGGIASAAL…LRKGKAITEL (404 aa)) form an FAD-dependent cmnm(5)s(2)U34 oxidoreductase region.

In the N-terminal section; belongs to the methyltransferase superfamily. tRNA (mnm(5)s(2)U34)-methyltransferase family. It in the C-terminal section; belongs to the DAO family. It depends on FAD as a cofactor.

It localises to the cytoplasm. It carries out the reaction 5-aminomethyl-2-thiouridine(34) in tRNA + S-adenosyl-L-methionine = 5-methylaminomethyl-2-thiouridine(34) in tRNA + S-adenosyl-L-homocysteine + H(+). Catalyzes the last two steps in the biosynthesis of 5-methylaminomethyl-2-thiouridine (mnm(5)s(2)U) at the wobble position (U34) in tRNA. Catalyzes the FAD-dependent demodification of cmnm(5)s(2)U34 to nm(5)s(2)U34, followed by the transfer of a methyl group from S-adenosyl-L-methionine to nm(5)s(2)U34, to form mnm(5)s(2)U34. The protein is tRNA 5-methylaminomethyl-2-thiouridine biosynthesis bifunctional protein MnmC of Vibrio vulnificus (strain YJ016).